Reading from the N-terminus, the 45-residue chain is Large ribosomal subunit protein bL34 (45 aa).

The protein belongs to the bacterial ribosomal protein bL34 family.

This chain is Large ribosomal subunit protein bL34, found in Streptomyces avermitilis (strain ATCC 31267 / DSM 46492 / JCM 5070 / NBRC 14893 / NCIMB 12804 / NRRL 8165 / MA-4680).